Here is a 409-residue protein sequence, read N- to C-terminus: Isovaleryl-CoA dehydrogenase, mitochondrial (409 aa).

The transit peptide at 1 to 22 (MQRFFSARSILGYAVKTRRRSF) directs the protein to the mitochondrion. Residues 151–160 (LAMSEPNAGS) and 184–186 (WCT) contribute to the FAD site. Ser-160 provides a ligand contact to substrate. Substrate-binding positions include 206 to 207 (SK), Tyr-261, and 268 to 271 (DLER). Residue Glu-270 is the Proton acceptor of the active site. Residues Arg-296, Gln-307, and 364 to 368 (QCLGG) contribute to the FAD site. 391-392 (AG) provides a ligand contact to substrate. 393–395 (TSE) lines the FAD pocket.

The protein belongs to the acyl-CoA dehydrogenase family. In terms of assembly, homodimer. FAD serves as cofactor. In terms of tissue distribution, expressed in leaves, stems and flowers. Not detected in roots.

The protein localises to the mitochondrion. The enzyme catalyses 3-methylbutanoyl-CoA + oxidized [electron-transfer flavoprotein] + H(+) = 3-methylbut-2-enoyl-CoA + reduced [electron-transfer flavoprotein]. It functions in the pathway amino-acid degradation; L-leucine degradation; (S)-3-hydroxy-3-methylglutaryl-CoA from 3-isovaleryl-CoA: step 1/3. Functionally, involved in degradation of the branched-chain amino acids, phytol and lysine for the supply of carbon and electrons to the ETF/ETFQO complex during dark-induced sugar starvation. The chain is Isovaleryl-CoA dehydrogenase, mitochondrial (IVD) from Arabidopsis thaliana (Mouse-ear cress).